Reading from the N-terminus, the 121-residue chain is NADH-ubiquinone oxidoreductase chain 3 (121 aa).

Helical transmembrane passes span 11 to 31 (ILTF…LSYF), 63 to 83 (FYLV…LFPW), and 90 to 110 (LSIF…LGFI).

It belongs to the complex I subunit 3 family.

The protein localises to the mitochondrion membrane. The enzyme catalyses a ubiquinone + NADH + 5 H(+)(in) = a ubiquinol + NAD(+) + 4 H(+)(out). Core subunit of the mitochondrial membrane respiratory chain NADH dehydrogenase (Complex I) that is believed to belong to the minimal assembly required for catalysis. Complex I functions in the transfer of electrons from NADH to the respiratory chain. The immediate electron acceptor for the enzyme is believed to be ubiquinone. The protein is NADH-ubiquinone oxidoreductase chain 3 (NAD3) of Porphyra purpurea (Red seaweed).